The sequence spans 347 residues: Glycerol-3-phosphate dehydrogenase [NAD(P)+] (347 aa).

NADPH-binding residues include W20, R39, and K118. Sn-glycerol 3-phosphate is bound by residues K118, G152, and S154. A156 serves as a coordination point for NADPH. Sn-glycerol 3-phosphate contacts are provided by K207, D260, S270, R271, and N272. The active-site Proton acceptor is K207. R271 contributes to the NADPH binding site. NADPH-binding residues include V295 and E297.

Belongs to the NAD-dependent glycerol-3-phosphate dehydrogenase family.

It is found in the cytoplasm. It catalyses the reaction sn-glycerol 3-phosphate + NAD(+) = dihydroxyacetone phosphate + NADH + H(+). The enzyme catalyses sn-glycerol 3-phosphate + NADP(+) = dihydroxyacetone phosphate + NADPH + H(+). Its pathway is membrane lipid metabolism; glycerophospholipid metabolism. Its function is as follows. Catalyzes the reduction of the glycolytic intermediate dihydroxyacetone phosphate (DHAP) to sn-glycerol 3-phosphate (G3P), the key precursor for phospholipid synthesis. The sequence is that of Glycerol-3-phosphate dehydrogenase [NAD(P)+] from Cupriavidus pinatubonensis (strain JMP 134 / LMG 1197) (Cupriavidus necator (strain JMP 134)).